A 140-amino-acid chain; its full sequence is uncharacterized protein (140 aa).

This is an uncharacterized protein from Archaeoglobus fulgidus (strain ATCC 49558 / DSM 4304 / JCM 9628 / NBRC 100126 / VC-16).